The chain runs to 226 residues: UPF0758 protein SPJ_1027 (226 aa).

The MPN domain maps to 103 to 225 (SILSSQKLAK…YFSYREKTDL (123 aa)). Zn(2+)-binding residues include H174, H176, and D187. The JAMM motif signature appears at 174 to 187 (HNHPSGAVAPSQND).

Belongs to the UPF0758 family.

The chain is UPF0758 protein SPJ_1027 from Streptococcus pneumoniae (strain JJA).